The primary structure comprises 101 residues: NADH-quinone oxidoreductase subunit K 1 (101 aa).

Transmembrane regions (helical) follow at residues I4–V24, V31–F51, and I64–F84.

The protein belongs to the complex I subunit 4L family. As to quaternary structure, NDH-1 is composed of 14 different subunits. Subunits NuoA, H, J, K, L, M, N constitute the membrane sector of the complex.

The protein resides in the cell inner membrane. The catalysed reaction is a quinone + NADH + 5 H(+)(in) = a quinol + NAD(+) + 4 H(+)(out). In terms of biological role, NDH-1 shuttles electrons from NADH, via FMN and iron-sulfur (Fe-S) centers, to quinones in the respiratory chain. The immediate electron acceptor for the enzyme in this species is believed to be ubiquinone. Couples the redox reaction to proton translocation (for every two electrons transferred, four hydrogen ions are translocated across the cytoplasmic membrane), and thus conserves the redox energy in a proton gradient. The chain is NADH-quinone oxidoreductase subunit K 1 from Koribacter versatilis (strain Ellin345).